The chain runs to 365 residues: SWR1 complex subunit 2 (365 aa).

Disordered stretches follow at residues 43–83 (ALKE…NEKE) and 95–147 (PGKT…EGEK). A compositionally biased stretch (acidic residues) spans 48–74 (EHDDEYEAEREVADEFDSDFNDDEPEP). Over residues 99 to 108 (ASKKKKKKTK) the composition is skewed to basic residues. Positions 118–132 (GDEKPGEELGNKEQE) are enriched in basic and acidic residues. Coiled coils occupy residues 123-150 (GEEL…KVIR) and 184-225 (GEEK…KAIV). Residues 133–144 (EKEENEAQEDME) are compositionally biased toward acidic residues. Residues 333–365 (RTKIPKSNKSFSLRSSARFLSSESEEESEEDSD) are disordered. Low complexity predominate over residues 342–354 (SFSLRSSARFLSS). Residues 355–365 (ESEEESEEDSD) show a composition bias toward acidic residues.

The protein belongs to the VPS72/YL1 family. Component of the SWR1 chromatin-remodeling complex composed of at least ARP6/ESD1/SUF3, PIE1, SWC6, SWC2 and H2AZs (HTA8, HTA9, HTA11). Interacts directly with SWC6 and H2AZs, but not with ARP6.

Component of the SWR1 complex which mediates the ATP-dependent exchange of histone H2A for the H2A variant H2A.F/Z leading to transcriptional regulation of selected genes (e.g. FLC) by chromatin remodeling. This Arabidopsis thaliana (Mouse-ear cress) protein is SWR1 complex subunit 2 (SWC2).